The following is a 381-amino-acid chain: Arginine biosynthesis bifunctional protein ArgJ (381 aa).

Residues T143, K165, T176, E255, N376, and T381 each coordinate substrate. The active-site Nucleophile is T176.

Belongs to the ArgJ family. Heterotetramer of two alpha and two beta chains.

The protein localises to the cytoplasm. It catalyses the reaction N(2)-acetyl-L-ornithine + L-glutamate = N-acetyl-L-glutamate + L-ornithine. It carries out the reaction L-glutamate + acetyl-CoA = N-acetyl-L-glutamate + CoA + H(+). It functions in the pathway amino-acid biosynthesis; L-arginine biosynthesis; L-ornithine and N-acetyl-L-glutamate from L-glutamate and N(2)-acetyl-L-ornithine (cyclic): step 1/1. Its pathway is amino-acid biosynthesis; L-arginine biosynthesis; N(2)-acetyl-L-ornithine from L-glutamate: step 1/4. Functionally, catalyzes two activities which are involved in the cyclic version of arginine biosynthesis: the synthesis of N-acetylglutamate from glutamate and acetyl-CoA as the acetyl donor, and of ornithine by transacetylation between N(2)-acetylornithine and glutamate. The polypeptide is Arginine biosynthesis bifunctional protein ArgJ (Thermus thermophilus (strain ATCC BAA-163 / DSM 7039 / HB27)).